A 508-amino-acid chain; its full sequence is Maturase K (508 aa).

This sequence belongs to the intron maturase 2 family. MatK subfamily.

It localises to the plastid. The protein resides in the chloroplast. Its function is as follows. Usually encoded in the trnK tRNA gene intron. Probably assists in splicing its own and other chloroplast group II introns. This Verbena rigida (Tuberous vervain) protein is Maturase K.